The chain runs to 314 residues: 4-hydroxy-3-methylbut-2-enyl diphosphate reductase (314 aa).

Cysteine 12 serves as a coordination point for [4Fe-4S] cluster. Residues histidine 41 and histidine 74 each coordinate (2E)-4-hydroxy-3-methylbut-2-enyl diphosphate. Dimethylallyl diphosphate is bound by residues histidine 41 and histidine 74. Positions 41 and 74 each coordinate isopentenyl diphosphate. Position 96 (cysteine 96) interacts with [4Fe-4S] cluster. A (2E)-4-hydroxy-3-methylbut-2-enyl diphosphate-binding site is contributed by histidine 124. Histidine 124 lines the dimethylallyl diphosphate pocket. Histidine 124 is a binding site for isopentenyl diphosphate. The active-site Proton donor is the glutamate 126. Threonine 167 serves as a coordination point for (2E)-4-hydroxy-3-methylbut-2-enyl diphosphate. Cysteine 197 is a binding site for [4Fe-4S] cluster. (2E)-4-hydroxy-3-methylbut-2-enyl diphosphate-binding residues include serine 225, serine 226, asparagine 227, and serine 269. The dimethylallyl diphosphate site is built by serine 225, serine 226, asparagine 227, and serine 269. Residues serine 225, serine 226, asparagine 227, and serine 269 each contribute to the isopentenyl diphosphate site.

The protein belongs to the IspH family. [4Fe-4S] cluster is required as a cofactor.

The enzyme catalyses isopentenyl diphosphate + 2 oxidized [2Fe-2S]-[ferredoxin] + H2O = (2E)-4-hydroxy-3-methylbut-2-enyl diphosphate + 2 reduced [2Fe-2S]-[ferredoxin] + 2 H(+). The catalysed reaction is dimethylallyl diphosphate + 2 oxidized [2Fe-2S]-[ferredoxin] + H2O = (2E)-4-hydroxy-3-methylbut-2-enyl diphosphate + 2 reduced [2Fe-2S]-[ferredoxin] + 2 H(+). It participates in isoprenoid biosynthesis; dimethylallyl diphosphate biosynthesis; dimethylallyl diphosphate from (2E)-4-hydroxy-3-methylbutenyl diphosphate: step 1/1. The protein operates within isoprenoid biosynthesis; isopentenyl diphosphate biosynthesis via DXP pathway; isopentenyl diphosphate from 1-deoxy-D-xylulose 5-phosphate: step 6/6. In terms of biological role, catalyzes the conversion of 1-hydroxy-2-methyl-2-(E)-butenyl 4-diphosphate (HMBPP) into a mixture of isopentenyl diphosphate (IPP) and dimethylallyl diphosphate (DMAPP). Acts in the terminal step of the DOXP/MEP pathway for isoprenoid precursor biosynthesis. In Haemophilus influenzae (strain ATCC 51907 / DSM 11121 / KW20 / Rd), this protein is 4-hydroxy-3-methylbut-2-enyl diphosphate reductase.